Consider the following 37-residue polypeptide: Large ribosomal subunit protein bL36c (37 aa).

It belongs to the bacterial ribosomal protein bL36 family.

The protein resides in the plastid. Its subcellular location is the organellar chromatophore. The sequence is that of Large ribosomal subunit protein bL36c from Paulinella chromatophora.